A 700-amino-acid chain; its full sequence is Small ribosomal subunit protein uS3c (700 aa).

Insert stretches follow at residues 88–196 (NCHM…LGKF) and 282–587 (KPCT…FQTR).

Belongs to the universal ribosomal protein uS3 family. As to quaternary structure, part of the 30S ribosomal subunit.

It is found in the plastid. The protein localises to the chloroplast. The polypeptide is Small ribosomal subunit protein uS3c (rps3) (Tetradesmus obliquus (Green alga)).